Reading from the N-terminus, the 182-residue chain is Protein Syd (182 aa).

This sequence belongs to the Syd family.

Its subcellular location is the cell inner membrane. Interacts with the SecY protein in vivo. May bind preferentially to an uncomplexed state of SecY, thus functioning either as a chelating agent for excess SecY in the cell or as a regulatory factor that negatively controls the translocase function. This Aeromonas hydrophila subsp. hydrophila (strain ATCC 7966 / DSM 30187 / BCRC 13018 / CCUG 14551 / JCM 1027 / KCTC 2358 / NCIMB 9240 / NCTC 8049) protein is Protein Syd.